Consider the following 184-residue polypeptide: UPF0397 protein SAOUHSC_03020 (184 aa).

5 consecutive transmembrane segments (helical) span residues 11 to 31, 44 to 64, 77 to 97, 116 to 136, and 148 to 168; these read VVAI…VVIP, AFLA…TGLV, AWWS…WIGL, IGQI…LDIL, and QGVI…TILL.

Belongs to the UPF0397 family.

The protein localises to the cell membrane. In Staphylococcus aureus (strain NCTC 8325 / PS 47), this protein is UPF0397 protein SAOUHSC_03020.